The following is a 369-amino-acid chain: Nuclear hormone receptor family member nhr-64 (369 aa).

A DNA-binding region (nuclear receptor) is located at residues 67-142; it reads EKCQVDKAKR…ASTRGLRTTV (76 aa). NR C4-type zinc fingers lie at residues 70–90 and 106–130; these read QVDKAKRNSCRKCRFDVCLRK and PANPLSNGSNGGIVPDDPLLDTLIR. Residues 120–352 form the NR LBD domain; sequence PDDPLLDTLI…NLMLELMLPN (233 aa).

This sequence belongs to the nuclear hormone receptor family.

The protein localises to the nucleus. Functionally, orphan nuclear receptor. The polypeptide is Nuclear hormone receptor family member nhr-64 (nhr-64) (Caenorhabditis elegans).